A 2328-amino-acid chain; its full sequence is Reducing polyketide synthase Preu2 (2328 aa).

A Ketosynthase family 3 (KS3) domain is found at 1–259; that stretch reads MMAVHLAVAS…GSNVHVIVES (259 aa). Positions 376–696 are malonyl-CoA:ACP transacylase (MAT) domain; the sequence is IFTGQGAQWP…SGLLKRSSNS (321 aa). Residues 766-899 form an N-terminal hotdog fold region; sequence NELLGEELSM…GSLTVQFGDD (134 aa). The tract at residues 766–1057 is dehydratase (DH) domain; the sequence is NELLGEELSM…FCTAPFRMST (292 aa). Residues 766–1059 enclose the PKS/mFAS DH domain; that stretch reads NELLGEELSM…TAPFRMSTPE (294 aa). The active-site Proton acceptor; for dehydratase activity is the H798. The interval 914 to 1059 is C-terminal hotdog fold; the sequence is LTELDLDTFY…TAPFRMSTPE (146 aa). The Proton donor; for dehydratase activity role is filled by D969. A methyltransferase (MT) domain region spans residues 1198–1419; the sequence is DGMLTQLYSE…VDERVVSLRD (222 aa). Residues 1932–2111 form a ketoreductase (KR)domain region; the sequence is CYIIIGTSDL…AASVVHLGHV (180 aa). The Carrier domain maps to 2231–2309; the sequence is SSSHDIIRNG…NIVDFAVAHL (79 aa). S2269 bears the O-(pantetheine 4'-phosphoryl)serine mark.

Pantetheine 4'-phosphate is required as a cofactor.

In terms of biological role, reducing polyketide synthase; part of a gene cluster that mediates the biosynthesis of a yet unidentified natural product. The chain is Reducing polyketide synthase Preu2 from Preussia isomera (Coprophilous fungus).